The chain runs to 343 residues: Multidrug resistance protein MdtN (343 aa).

Residues 1 to 12 lie on the Cytoplasmic side of the membrane; the sequence is MESTPKKAPRSK. Residues 13–33 form a helical; Signal-anchor for type II membrane protein membrane-spanning segment; sequence FPALLVVALALVALVFVIWRV. Residues 34-343 lie on the Periplasmic side of the membrane; sequence DSAPSTNDAY…ASAVANLEPQ (310 aa).

The protein belongs to the membrane fusion protein (MFP) (TC 8.A.1) family. As to quaternary structure, could be part of a tripartite efflux system composed of MdtN, MdtO and MdtP.

It localises to the cell inner membrane. Functionally, could be involved in resistance to puromycin, acriflavine and tetraphenylarsonium chloride. The sequence is that of Multidrug resistance protein MdtN (mdtN) from Escherichia coli (strain K12).